The primary structure comprises 183 residues: Photosystem I assembly protein Ycf4 (183 aa).

Transmembrane regions (helical) follow at residues 21 to 43 and 63 to 85; these read YIWGSLMCLGGLGFLTIGISSYL and LVMCFYGVLGFLLGVYIWLLILW.

The protein belongs to the Ycf4 family.

The protein localises to the plastid. Its subcellular location is the chloroplast thylakoid membrane. Functionally, seems to be required for the assembly of the photosystem I complex. This Chlorella vulgaris (Green alga) protein is Photosystem I assembly protein Ycf4.